The following is a 257-amino-acid chain: Adenosylcobinamide-GDP ribazoletransferase (257 aa).

Helical transmembrane passes span 7 to 27, 39 to 59, 61 to 81, 113 to 133, 143 to 163, and 196 to 216; these read QLTL…PTWV, RYFG…YEIT, GFLP…VVTG, IGTY…ILLS, VVTA…SLIF, and VLVL…GLVL.

This sequence belongs to the CobS family. Requires Mg(2+) as cofactor.

It is found in the cell inner membrane. It catalyses the reaction alpha-ribazole + adenosylcob(III)inamide-GDP = adenosylcob(III)alamin + GMP + H(+). It carries out the reaction alpha-ribazole 5'-phosphate + adenosylcob(III)inamide-GDP = adenosylcob(III)alamin 5'-phosphate + GMP + H(+). The protein operates within cofactor biosynthesis; adenosylcobalamin biosynthesis; adenosylcobalamin from cob(II)yrinate a,c-diamide: step 7/7. Its function is as follows. Joins adenosylcobinamide-GDP and alpha-ribazole to generate adenosylcobalamin (Ado-cobalamin). Also synthesizes adenosylcobalamin 5'-phosphate from adenosylcobinamide-GDP and alpha-ribazole 5'-phosphate. This is Adenosylcobinamide-GDP ribazoletransferase from Shewanella woodyi (strain ATCC 51908 / MS32).